Consider the following 893-residue polypeptide: Translation initiation factor IF-2 (893 aa).

Disordered stretches follow at residues 51–203 and 216–299; these read KEHG…AEAE and EENE…TSMQ. Composition is skewed to basic and acidic residues over residues 102-203, 216-238, and 245-261; these read ALEE…AEAE, EENE…DADY, and HARE…EQQP. Residues 392–561 enclose the tr-type G domain; that stretch reads GRAPVVTIMG…LLQSEVLELT (170 aa). Residues 401–408 form a G1 region; it reads GHVDHGKT. A GTP-binding site is contributed by 401–408; the sequence is GHVDHGKT. Positions 426–430 are G2; it reads GITQH. The tract at residues 447–450 is G3; that stretch reads DTPG. Residues 447 to 451 and 501 to 504 contribute to the GTP site; these read DTPGH and NKID. A G4 region spans residues 501–504; sequence NKID. A G5 region spans residues 537 to 539; sequence SAK.

It belongs to the TRAFAC class translation factor GTPase superfamily. Classic translation factor GTPase family. IF-2 subfamily.

It is found in the cytoplasm. One of the essential components for the initiation of protein synthesis. Protects formylmethionyl-tRNA from spontaneous hydrolysis and promotes its binding to the 30S ribosomal subunits. Also involved in the hydrolysis of GTP during the formation of the 70S ribosomal complex. The chain is Translation initiation factor IF-2 from Aliivibrio fischeri (strain ATCC 700601 / ES114) (Vibrio fischeri).